A 288-amino-acid chain; its full sequence is ATP synthase gamma chain (288 aa).

This sequence belongs to the ATPase gamma chain family. As to quaternary structure, F-type ATPases have 2 components, CF(1) - the catalytic core - and CF(0) - the membrane proton channel. CF(1) has five subunits: alpha(3), beta(3), gamma(1), delta(1), epsilon(1). CF(0) has three main subunits: a, b and c.

It is found in the cell membrane. Produces ATP from ADP in the presence of a proton gradient across the membrane. The gamma chain is believed to be important in regulating ATPase activity and the flow of protons through the CF(0) complex. The chain is ATP synthase gamma chain from Staphylococcus haemolyticus (strain JCSC1435).